The primary structure comprises 331 residues: Phosphatidylinositol transfer protein 4 (331 aa).

The protein belongs to the PtdIns transfer protein family. PI transfer class IIA subfamily.

Its function is as follows. Catalyzes the transfer of PtdIns and phosphatidylcholine between membranes. The polypeptide is Phosphatidylinositol transfer protein 4 (pitD) (Dictyostelium discoideum (Social amoeba)).